The primary structure comprises 2622 residues: Ankyrin-3 (2622 aa).

The disordered stretch occupies residues 1–44; sequence MAHAASQLKKNRDLEINAEEETEKKKKHRKRSRDRKKKSDANAS. Over residues 25-38 the composition is skewed to basic residues; that stretch reads KKKHRKRSRDRKKK. At Ser-39 the chain carries Phosphoserine. ANK repeat units lie at residues 73–102, 106–135, 139–168, 172–201, 203–230, 242–271, 275–304, 308–337, 341–370, 374–403, 407–436, 440–469, 473–502, 506–535, 539–568, 572–601, 605–634, 638–667, 671–700, 704–733, 737–766, 770–799, and 803–832; these read NGLNALHLASKEGHVEVVSELLQREANVDA, KGNTALHIASLAGQAEVVKVLVTNGANVNA, NGFTPLYMAAQENHLEVVRFLLDNGASQSL, DGFTPLAVALQQGHDQVVSLLLENDTKGKV, LPALHIAARKDDTKAAALLLQNDTNADI, SGFTPLHIAAHYGNINVATLLLNRAAAVDF, NDITPLHVASKRGNANMVKLLLDRGAKIDA, DGLTPLHCGARSGHEQVVEMLLDRAAPILS, NGLSPLHMATQGDHLNCVQLLLQHNVPVDD, DYLTALHVAAHCGHYKVAKVLLDKKANPNA, NGFTPLHIACKKNRIRVMELLLKHGASIQA, SGLTPIHVAAFMGHVNIVSQLMHHGASPNT, RGETALHMAARSGQAEVVRYLVQDGAQVEA, DDQTPLHISARLGKADIVQQLLQQGASPNA, SGYTPLHLSAREGHEDVAAFLLDHGASLSI, KGFTPLHVAAKYGKLEVASLLLQKSASPDA, SGLTPLHVAAHYDNQKVALLLLDQGASPHA, NGYTPLHIAAKKNQMDIATSLLEYGADANA, QGIASVHLAAQEGHVDMVSLLLSRNANVNL, SGLTPLHLAAQEDRVNVAEVLVNQGAHVDA, MGYTPLHVGCHYGNIKIVNFLLQHSAKVNA, NGYTPLHQAAQQGHTHIINVLLQNNASPNE, and NGNTALAIARRLGYISVVDTLKVVTEEIMT. Phosphoserine is present on Ser-631. A phosphoserine mark is found at Val-851, Ser-855, Ser-869, Ser-875, Ser-921, Ser-924, Ser-930, Ser-965, Ser-967, and Ser-1121. Positions 868–889 are disordered; it reads LSDGEYISDGEEGEDAITGDTD. The segment covering 873-884 has biased composition (acidic residues); it reads YISDGEEGEDAI. ZU5 domains lie at 992-1147 and 1149-1296; these read FLVS…VVSR and KQES…LADC. 2 positions are modified to phosphoserine: Ser-1458 and Ser-1469. The interval 1510-1539 is disordered; sequence TPITVPGPAKSGSLSSSPSNTPSASPLKSI. The segment covering 1515 to 1536 has biased composition (low complexity); that stretch reads PGPAKSGSLSSSPSNTPSASPL. Ser-1621, Ser-1624, Ser-1679, Ser-1984, Ser-2102, Ser-2114, and Ser-2117 each carry phosphoserine. Disordered stretches follow at residues 1968-1992, 2099-2147, and 2292-2312; these read VESKGPPKSPKSDKGHSPEDDWTEF, ILES…FHEV, and SPDVAKSAAETSAQHAEKDNQ. A compositionally biased stretch (basic and acidic residues) spans 1977 to 1986; it reads PKSDKGHSPE. Residues 2106–2127 are compositionally biased toward basic and acidic residues; that stretch reads FSQHDQDKSPLSDSGFETRSEK. Residues 2128–2137 show a composition bias toward polar residues; sequence TPSAPQSAES. Residues 2336–2420 enclose the Death domain; it reads TDIRMAIVAD…DIVTLLEGPI (85 aa). Phosphoserine is present on residues Ser-2457, Ser-2475, and Ser-2544. Residues 2568–2622 form a disordered region; it reads CVPVGMKKMTRTPADGKARLNLQEEEGSARSEPKQGEGYKVKTKKEIRNVEKKAH. Residues 2594-2622 show a composition bias toward basic and acidic residues; sequence GSARSEPKQGEGYKVKTKKEIRNVEKKAH.

As to quaternary structure, may be a constituent of a NFASC/NRCAM/ankyrin G complex. Interacts with RHBG. Directly interacts with DMD and betaDAG1; this interaction does not interfere with DMD-binding and is required for DMD and betaDAG1 retention at costameres. Interacts (via N-terminal ANK repeats) with SCHIP1 isoform 7 (via C-terminus); this interaction is required for the localization at axon initial segments (AISs) and nodes of Ranvier (NRs). Interacts with PLEC and FLNC. Interacts (via ANK repeats) with IQCJ-SCHIP1; required for IQCJ-SCHIP1 localization at axon initial segments (AIS) and nodes of Ranvier. Interacts with SCHIP1. Interacts with KCNA1; this inhibits channel activity. Interacts with SCN5A. Interacts with PKP2 and GJA1/CX43. Interacts (via its C-terminal muscle-specific Obscurin/Titin-Binding-related domain sequence) with PLEC and FLNC. In terms of tissue distribution, expressed in the heart (at protein level). Expressed in skeletal muscle (at protein level). Expressed at highest levels in brain and testis, followed by skin, kidney, liver and spleen. As to expression, may be specifically expressed in muscle tissues, including heart and skeletal muscle (extensor digitorum longus) (at protein level). Expressed in skeletal muscle, brain, lung, heart, testes and kidney.

It localises to the cytoplasm. It is found in the cytoskeleton. The protein resides in the cell projection. The protein localises to the axon. Its subcellular location is the cell membrane. It localises to the sarcolemma. It is found in the postsynaptic cell membrane. The protein resides in the lysosome. The protein localises to the T-tubule. In terms of biological role, membrane-cytoskeleton linker. May participate in the maintenance/targeting of ion channels and cell adhesion molecules at the nodes of Ranvier and axonal initial segments. In skeletal muscle, required for costamere localization of DMD and betaDAG1. Regulates KCNA1 channel activity in function of dietary Mg(2+) levels, and thereby contributes to the regulation of renal Mg(2+) reabsorption. Required for intracellular adhesion and junctional conductance in myocytes, potentially via stabilization of GJA1/CX43 protein abundance and promotion of PKP2, GJA1/CX43, and SCN5A/Nav1.5 localization to cell-cell junctions. This Rattus norvegicus (Rat) protein is Ankyrin-3 (Ank3).